Here is a 206-residue protein sequence, read N- to C-terminus: Ras-related protein Ral-B (206 aa).

21 to 29 (GSGGVGKSA) is a binding site for GTP. The Effector region motif lies at 43-51 (YEPTKADSY). Residues 68–72 (DTAGQ), 128–131 (NKSD), and 158–160 (SAK) each bind GTP. The segment covering 180–189 (KMSENKDKNG) has biased composition (basic and acidic residues). Residues 180 to 206 (KMSENKDKNGKKSGKNKKSFKERCCLL) form a disordered region. At cysteine 203 the chain carries Cysteine methyl ester. Cysteine 203 carries S-geranylgeranyl cysteine lipidation. Residues 204–206 (CLL) constitute a propeptide, removed in mature form.

This sequence belongs to the small GTPase superfamily. Ras family. Interacts with EXOC2/Sec5 and EXOC8/Exo84. Interacts (via effector domain) with RALBP1. Prenylation is essential for membrane localization. Post-translationally, the farnesylated form confers resistance to the proapoptotic and anti-anchorage-dependent growth effects of some geranylgeranyltransferase I inhibitors.

It is found in the cell membrane. The protein resides in the midbody. It carries out the reaction GTP + H2O = GDP + phosphate + H(+). With respect to regulation, alternates between an inactive form bound to GDP and an active form bound to GTP. Activated by a guanine nucleotide-exchange factor (GEF) and inactivated by a GTPase-activating protein (GAP). In terms of biological role, multifunctional GTPase involved in a variety of cellular processes including gene expression, cell migration, cell proliferation, oncogenic transformation and membrane trafficking. Accomplishes its multiple functions by interacting with distinct downstream effectors. Acts as a GTP sensor for GTP-dependent exocytosis of dense core vesicles. Required both to stabilize the assembly of the exocyst complex and to localize functional exocyst complexes to the leading edge of migrating cells. Required for suppression of apoptosis. In late stages of cytokinesis, upon completion of the bridge formation between dividing cells, mediates exocyst recruitment to the midbody to drive abscission. Involved in ligand-dependent receptor mediated endocytosis of the EGF and insulin receptors. In Macaca fascicularis (Crab-eating macaque), this protein is Ras-related protein Ral-B (RALB).